Consider the following 699-residue polypeptide: Epithelial sodium channel subunit alpha (699 aa).

Positions 1–71 are disordered; it reads MLDHTRAPEL…EPRQPTEEEE (71 aa). The Cytoplasmic portion of the chain corresponds to 1 to 110; sequence MLDHTRAPEL…CSKHNRMKTA (110 aa). Residues 111–131 form a helical membrane-spanning segment; sequence FWAVLWLCTFGMMYWQFALLF. At 132–589 the chain is on the extracellular side; sequence EEYFSYPVSL…SQWSLWFGSS (458 aa). Intrachain disulfides connect C158–C332, C256–C263, C309–C316, C421–C506, C443–C483, C443–C502, C447–C498, C456–C483, C456–C506, and C458–C472. The tract at residues 200-270 is gating release of inhibition by proteolysis (GRIP); protease-sensitive region that is responsible for the proteolytic activation of the channel; it reads RRRSTRDLRG…SDCFYQTYSS (71 aa). The disordered stretch occupies residues 211–244; it reads LPHPLQRLRTPPPPNPARSARSASSSVRDNNPQV. Over residues 227-238 the composition is skewed to low complexity; the sequence is ARSARSASSSVR. A helical transmembrane segment spans residues 590–610; that stretch reads VLSVVEMAELIFDLLVITLIM. Over 611–699 the chain is Cytoplasmic; that stretch reads LLHRFRSRYW…SSACAPAMAL (89 aa). Residues 637 to 699 are disordered; sequence ASSFPSRFCP…SSACAPAMAL (63 aa). Low complexity predominate over residues 656 to 667; the sequence is PQQGTTPPLALT. A PY motif; recruits WW domain-containing proteins and is thereby required for ubiquitination and inhibition of the channel by NEDD4 and NEDD4L motif is present at residues 669 to 673; that stretch reads PPPAY.

It belongs to the amiloride-sensitive sodium channel (TC 1.A.6) family. SCNN1A subfamily. As to quaternary structure, heterotrimer; containing an alpha/SCNN1A, a beta/SCNN1B and a gamma/SCNN1G subunit. Interacts with WWP1 (via WW domains). Interacts with WWP2 (via WW domains); inhibits the channel. Interacts with BPIFA1; the interaction is indirect via SCNN1B and inhibits the proteolytic processing of SCNN1A and SCNN1G and the activation of ENaC. Interacts with the full-length immature form of PCSK9 (pro-PCSK9). Ubiquitinated. Can be ubiquitinated at multiple sites and undergo monoubiquitination and polyubiquitination. Ubiquitination by NEDD4 or NEDD4L inhibits the ENaC channel through endocytosis, intracellular retention and degradation of its individual subunits. In terms of processing, ENaC is activated through the proteolytic maturation of its subunits. Furin cleaves the SCNN1A subunit, which results in a stepwise increase in the open probability of the channel due to the release of an inhibitory tract. BPIFA1, which is recruited by the SCNN1B subunit, prevents the proteolytic activation of ENaC. Post-translationally, N-glycosylated. In terms of tissue distribution, expressed in kidney (at protein level). Expressed in lung (at protein level). Expressed in the epididymis (at protein level). In the caput and corpus regions of the epididymis, expressed uniformly on the luminal and basal surfaces of the ducts and in the sperm in the duct lumen. Also expressed in distal colon and, at low levels, in liver.

The protein localises to the apical cell membrane. Its subcellular location is the cell projection. The protein resides in the cilium. It localises to the cytoplasmic granule. It is found in the cytoplasm. The protein localises to the cytoplasmic vesicle. Its subcellular location is the secretory vesicle. The protein resides in the acrosome. It localises to the flagellum. It carries out the reaction Na(+)(in) = Na(+)(out). With respect to regulation, originally identified and characterized by its inhibition by the diuretic drug amiloride. Its function is as follows. This is one of the three pore-forming subunits of the heterotrimeric epithelial sodium channel (ENaC), a critical regulator of sodium balance and fluid homeostasis. ENaC operates in epithelial tissues, where it mediates the electrodiffusion of sodium ions from extracellular fluid through the apical membrane of cells, with water following osmotically. It plays a key role in maintaining sodium homeostasis through electrogenic sodium reabsorption in the kidneys. Additionally, ENaC is essential for airway surface liquid homeostasis, which is crucial for proper mucus clearance. The protein is Epithelial sodium channel subunit alpha of Mus musculus (Mouse).